The following is a 176-amino-acid chain: MSIEEIPQGADVNVIPKNEKKARELIKKLNLKQIKGITRVTFKQRGNLIYAIDAPDVYRSAAGTYVVFGEAKVDDMNQRIADAQAAQAAETDAHAGHTHSHGEEDKSPEAITADLEKASLTEKIEEEEEEGEVDESGLDAKDIDIIVEQTQVSRAKAVKALRKHDGDMVNAIMELS.

Residues 16 to 80 enclose the NAC-A/B domain; the sequence is PKNEKKAREL…AKVDDMNQRI (65 aa). The interval 83 to 110 is disordered; sequence AQAAQAAETDAHAGHTHSHGEEDKSPEA. Positions 91–110 are enriched in basic and acidic residues; that stretch reads TDAHAGHTHSHGEEDKSPEA. Residues 138-175 form the UBA domain; it reads LDAKDIDIIVEQTQVSRAKAVKALRKHDGDMVNAIMEL.

Belongs to the NAC-alpha family. In terms of assembly, part of the nascent polypeptide-associated complex (NAC), consisting of EGD2 and EGD1. NAC associates with ribosomes via EGD1.

It is found in the cytoplasm. The protein localises to the nucleus. Component of the nascent polypeptide-associated complex (NAC), a dynamic component of the ribosomal exit tunnel, protecting the emerging polypeptides from interaction with other cytoplasmic proteins to ensure appropriate nascent protein targeting. The NAC complex also promotes mitochondrial protein import by enhancing productive ribosome interactions with the outer mitochondrial membrane and blocks the inappropriate interaction of ribosomes translating non-secretory nascent polypeptides with translocation sites in the membrane of the endoplasmic reticulum. EGD2 may also be involved in transcription regulation. The sequence is that of Nascent polypeptide-associated complex subunit alpha (EGD2) from Scheffersomyces stipitis (strain ATCC 58785 / CBS 6054 / NBRC 10063 / NRRL Y-11545) (Yeast).